A 204-amino-acid chain; its full sequence is Small heat shock protein, chloroplastic (204 aa).

Residues 34–55 (QMGRVDHDHELDDRSNRAPISR) form a disordered region. The span at 37-49 (RVDHDHELDDRSN) shows a compositional bias: basic and acidic residues. The 107-residue stretch at 98-204 (GSGRAMRRGW…KKDVFQVMVD (107 aa)) folds into the sHSP domain.

The protein belongs to the small heat shock protein (HSP20) family.

The protein resides in the plastid. It is found in the chloroplast stroma. The protein is Small heat shock protein, chloroplastic (HSP23) of Oxybasis rubra (Red goosefoot).